A 275-amino-acid chain; its full sequence is Chemotaxis protein methyltransferase Cher2 (275 aa).

The 275-residue stretch at 1-275 (MSTGNLDFEQ…CSPGIIYQAK (275 aa)) folds into the CheR-type methyltransferase domain. Residues Asn73, Thr75, Arg79, Glu116, Asp145, 201 to 202 (NL), and 218 to 219 (RN) each bind S-adenosyl-L-methionine.

Monomer.

It carries out the reaction L-glutamyl-[protein] + S-adenosyl-L-methionine = [protein]-L-glutamate 5-O-methyl ester + S-adenosyl-L-homocysteine. In terms of biological role, methylation of the membrane-bound methyl-accepting chemotaxis proteins (MCP) to form gamma-glutamyl methyl ester residues in MCP. Methylates the McpS chemotaxis receptor. The protein is Chemotaxis protein methyltransferase Cher2 (cheR2) of Pseudomonas putida (strain ATCC 47054 / DSM 6125 / CFBP 8728 / NCIMB 11950 / KT2440).